We begin with the raw amino-acid sequence, 308 residues long: Aspartate carbamoyltransferase catalytic subunit (308 aa).

Carbamoyl phosphate is bound by residues arginine 51 and threonine 52. Lysine 79 contacts L-aspartate. Residues arginine 101, histidine 130, and glutamine 133 each coordinate carbamoyl phosphate. L-aspartate is bound by residues arginine 163 and arginine 215. Positions 258 and 259 each coordinate carbamoyl phosphate.

The protein belongs to the aspartate/ornithine carbamoyltransferase superfamily. ATCase family. In terms of assembly, heterododecamer (2C3:3R2) of six catalytic PyrB chains organized as two trimers (C3), and six regulatory PyrI chains organized as three dimers (R2).

The enzyme catalyses carbamoyl phosphate + L-aspartate = N-carbamoyl-L-aspartate + phosphate + H(+). It functions in the pathway pyrimidine metabolism; UMP biosynthesis via de novo pathway; (S)-dihydroorotate from bicarbonate: step 2/3. In terms of biological role, catalyzes the condensation of carbamoyl phosphate and aspartate to form carbamoyl aspartate and inorganic phosphate, the committed step in the de novo pyrimidine nucleotide biosynthesis pathway. This chain is Aspartate carbamoyltransferase catalytic subunit, found in Pediococcus pentosaceus (strain ATCC 25745 / CCUG 21536 / LMG 10740 / 183-1w).